The following is a 444-amino-acid chain: Trigger factor (444 aa).

The region spanning 165–250 (GDFAKFDFEG…LHEIQELKIP (86 aa)) is the PPIase FKBP-type domain.

It belongs to the FKBP-type PPIase family. Tig subfamily.

Its subcellular location is the cytoplasm. The enzyme catalyses [protein]-peptidylproline (omega=180) = [protein]-peptidylproline (omega=0). Its function is as follows. Involved in protein export. Acts as a chaperone by maintaining the newly synthesized protein in an open conformation. Functions as a peptidyl-prolyl cis-trans isomerase. The polypeptide is Trigger factor (Campylobacter jejuni subsp. jejuni serotype O:6 (strain 81116 / NCTC 11828)).